A 651-amino-acid polypeptide reads, in one-letter code: 120 kDa Glycoprotein O (651 aa).

The N-terminal stretch at 1 to 56 (MHLEVIVQSYKKSKYYFSHTFYLYKFIVVNSPDMLHISRLGLFLGLFAIVMHSVNL) is a signal peptide. Residues Asn-74, Asn-97, Asn-147, Asn-208, Asn-223, Asn-234, and Asn-254 are each glycosylated (N-linked (GlcNAc...) asparagine; by host). A compositionally biased stretch (low complexity) spans 275–292 (SSTSASLTSPHIPSTNIP). The interval 275–303 (SSTSASLTSPHIPSTNIPTPAPPPVTKNS) is disordered. Asn-302, Asn-355, Asn-378, Asn-395, Asn-469, Asn-502, Asn-520, Asn-546, Asn-603, Asn-620, and Asn-631 each carry an N-linked (GlcNAc...) asparagine; by host glycan.

Belongs to the herpesviridae U47 family. In terms of assembly, part of a gH-gL-gO complex. In terms of processing, a shorter mature protein, gO-80K, is produced probably by proteolytic cleavage. Post-translationally, modified with high mannose-oligosaccharides. N-glycosylated with complex glycans.

The protein resides in the virion. It localises to the host cell membrane. This chain is 120 kDa Glycoprotein O (U47), found in Human herpesvirus 6A (strain Uganda-1102) (HHV-6 variant A).